Reading from the N-terminus, the 303-residue chain is tRNA (guanine-N(7)-)-methyltransferase (303 aa).

The disordered stretch occupies residues 1–64 (MPKPHQVQVI…STSDKISLPR (64 aa)). Basic and acidic residues predominate over residues 10–38 (IKDRETQLREQQEAESKRRTYRDVKEETR). S-adenosyl-L-methionine is bound by residues Gly-118, 141–142 (EI), 177–178 (NA), and Cys-197. Asp-200 is a catalytic residue. 275–277 (TEE) contacts S-adenosyl-L-methionine.

This sequence belongs to the class I-like SAM-binding methyltransferase superfamily. TrmB family. In terms of assembly, forms a complex with TRM82.

The protein localises to the nucleus. It carries out the reaction guanosine(46) in tRNA + S-adenosyl-L-methionine = N(7)-methylguanosine(46) in tRNA + S-adenosyl-L-homocysteine. The protein operates within tRNA modification; N(7)-methylguanine-tRNA biosynthesis. Functionally, catalyzes the formation of N(7)-methylguanine at position 46 (m7G46) in tRNA. The chain is tRNA (guanine-N(7)-)-methyltransferase from Scheffersomyces stipitis (strain ATCC 58785 / CBS 6054 / NBRC 10063 / NRRL Y-11545) (Yeast).